The primary structure comprises 384 residues: Centrosomal protein of 44 kDa (384 aa).

The binds with microtubules and centrioles stretch occupies residues 11-188 (RKLEQRLRTL…TKCYSSALVE (178 aa)). Positions 191–222 (EEEEPTSDSEGGSHLEHEMESPFETAETTPNS) are disordered. Positions 201-210 (GGSHLEHEME) are enriched in basic and acidic residues. 2 coiled-coil regions span residues 221-260 (NSEQIELLRKQLAECQEKLQRLDCVEQRLQSLETSMKGKI) and 353-378 (TEDSNETTKQRMERITKMMEETSKLL).

Binds to centriolar microtubules.

Its subcellular location is the cytoplasm. The protein resides in the cytoskeleton. It localises to the microtubule organizing center. It is found in the centrosome. The protein localises to the centriole. Its subcellular location is the spindle pole. The protein resides in the midbody. In terms of biological role, centriole-enriched microtubule-binding protein involved in centriole biogenesis. In collaboration with CEP295 and POC1B, is required for the centriole-to-centrosome conversion by ensuring the formation of bona fide centriole wall. Functions as a linker component that maintains centrosome cohesion. Associates with CROCC and regulates its stability and localization to the centrosome. This chain is Centrosomal protein of 44 kDa (cep44), found in Xenopus laevis (African clawed frog).